The primary structure comprises 188 residues: Quinone reductase (188 aa).

FMN is bound by residues 13 to 20 (SLRKGSFN), 82 to 85 (EYNY), and S117.

Belongs to the SsuE family. As to quaternary structure, homotetramer. Dimer of dimers. The tetrameric configuration has a central role in chromate reductase activity. It depends on FMN as a cofactor.

The catalysed reaction is a quinone + NADH + H(+) = a quinol + NAD(+). It catalyses the reaction a quinone + NADPH + H(+) = a quinol + NADP(+). It carries out the reaction Cr(6+) + 2 NADH + O2 = Cr(3+) + superoxide + 2 NAD(+) + 2 H(+). The enzyme catalyses Cr(6+) + 2 NADPH + O2 = Cr(3+) + superoxide + 2 NADP(+) + 2 H(+). In terms of biological role, catalyzes the reduction of quinones. Acts by simultaneous two-electron transfer, avoiding formation of highly reactive semiquinone intermediates and producing quinols that promote tolerance of H(2)O(2). Quinone reduction is probably the primary biological role of ChrR. Can also reduce toxic chromate to insoluble and less toxic Cr(3+). Catalyzes the transfer of three electrons to Cr(6+) producing Cr(3+) and one electron to molecular oxygen without producing the toxic Cr(5+) species and only producing a minimal amount of reactive oxygen species (ROS). Chromate reduction protects the cell against chromate toxicity, but is likely a secondary activity. This is Quinone reductase (chrR) from Escherichia coli O157:H7.